Reading from the N-terminus, the 552-residue chain is Dihydroxy-acid dehydratase (552 aa).

Position 78 (D78) interacts with Mg(2+). Residue C119 coordinates [2Fe-2S] cluster. Positions 120 and 121 each coordinate Mg(2+). N6-carboxylysine is present on K121. Residue C191 participates in [2Fe-2S] cluster binding. E442 is a Mg(2+) binding site. S468 (proton acceptor) is an active-site residue.

The protein belongs to the IlvD/Edd family. As to quaternary structure, homodimer. [2Fe-2S] cluster serves as cofactor. Requires Mg(2+) as cofactor.

The catalysed reaction is (2R)-2,3-dihydroxy-3-methylbutanoate = 3-methyl-2-oxobutanoate + H2O. The enzyme catalyses (2R,3R)-2,3-dihydroxy-3-methylpentanoate = (S)-3-methyl-2-oxopentanoate + H2O. The protein operates within amino-acid biosynthesis; L-isoleucine biosynthesis; L-isoleucine from 2-oxobutanoate: step 3/4. It functions in the pathway amino-acid biosynthesis; L-valine biosynthesis; L-valine from pyruvate: step 3/4. Functionally, functions in the biosynthesis of branched-chain amino acids. Catalyzes the dehydration of (2R,3R)-2,3-dihydroxy-3-methylpentanoate (2,3-dihydroxy-3-methylvalerate) into 2-oxo-3-methylpentanoate (2-oxo-3-methylvalerate) and of (2R)-2,3-dihydroxy-3-methylbutanoate (2,3-dihydroxyisovalerate) into 2-oxo-3-methylbutanoate (2-oxoisovalerate), the penultimate precursor to L-isoleucine and L-valine, respectively. In Clostridium botulinum (strain Eklund 17B / Type B), this protein is Dihydroxy-acid dehydratase.